The sequence spans 205 residues: Transcriptional regulatory protein PdtaR (205 aa).

A Response regulatory domain is found at 15-129 (RVLIAEDEAL…DLIPAIELAV (115 aa)). A 4-aspartylphosphate modification is found at aspartate 65. One can recognise an ANTAR domain in the interval 135 to 196 (ITALEGEVAT…TMKRVAEVVL (62 aa)).

In terms of processing, phosphorylated and activated by PdtaS.

The protein localises to the cytoplasm. Its function is as follows. Member of the two-component regulatory system PdtaR/PdtaS. This two-component system plays an essential role in mycobacterial adaptation to poor nutrient conditions. PdtaR probably acts at the level of transcriptional antitermination rather than transcriptional initiation. In addition, the PdtaR/PdtaS two-component system controls copper and nitric oxide (NO) resistance downstream of the intramembrane protease Rip1. This coupled Rip1/PdtaS/PdtaR circuit controls NO resistance and acute lung infection in mice by relieving PdtaR/PdtaS-mediated repression of isonitrile chalkophore biosynthesis. Two signals are required to fully inactivate the PdtaR/PdtaS system and mediate NO resistance: a cytoplasmic inhibitory signal through the PdtaS kinase mediated by direct sensing of NO and the production of PPE1-5', an NO-induced small RNA, to sequester PdtaR. This chain is Transcriptional regulatory protein PdtaR (pdtaR), found in Mycobacterium tuberculosis (strain CDC 1551 / Oshkosh).